The primary structure comprises 333 residues: Mevalonate kinase (333 aa).

An ATP-binding site is contributed by Pro-109–Ala-119. Asp-160 functions as the Proton acceptor in the catalytic mechanism.

The protein belongs to the GHMP kinase family. Mevalonate kinase subfamily. Homodimer. Mg(2+) is required as a cofactor.

Its subcellular location is the cytoplasm. The catalysed reaction is (R)-mevalonate + ATP = (R)-5-phosphomevalonate + ADP + H(+). The protein operates within isoprenoid biosynthesis; isopentenyl diphosphate biosynthesis via mevalonate pathway; isopentenyl diphosphate from (R)-mevalonate: step 1/3. Its function is as follows. Catalyzes the phosphorylation of (R)-mevalonate (MVA) to (R)-mevalonate 5-phosphate (MVAP). Functions in the mevalonate (MVA) pathway leading to isopentenyl diphosphate (IPP), a key precursor for the biosynthesis of isoprenoid compounds such as archaeal membrane lipids. The protein is Mevalonate kinase of Thermococcus sibiricus (strain DSM 12597 / MM 739).